A 534-amino-acid polypeptide reads, in one-letter code: Peptide chain release factor 3 (534 aa).

Residues 9–278 form the tr-type G domain; sequence ARRRTFAIIS…FFVEHAPPPQ (270 aa). GTP contacts are provided by residues 18–25, 86–90, and 140–143; these read SHPDAGKT, DTPGH, and NKLD.

It belongs to the TRAFAC class translation factor GTPase superfamily. Classic translation factor GTPase family. PrfC subfamily.

The protein localises to the cytoplasm. Functionally, increases the formation of ribosomal termination complexes and stimulates activities of RF-1 and RF-2. It binds guanine nucleotides and has strong preference for UGA stop codons. It may interact directly with the ribosome. The stimulation of RF-1 and RF-2 is significantly reduced by GTP and GDP, but not by GMP. The chain is Peptide chain release factor 3 from Xanthomonas axonopodis pv. citri (strain 306).